Here is a 621-residue protein sequence, read N- to C-terminus: UvrABC system protein C (621 aa).

The GIY-YIG domain occupies 20–106; that stretch reads TQSGIYQFFD…IKSLKPKYNI (87 aa). One can recognise a UVR domain in the interval 212–247; that stretch reads KALLKILESKMHTLSHNLQFEEAAIMRDRIQKITQM.

The protein belongs to the UvrC family. In terms of assembly, interacts with UvrB in an incision complex.

The protein localises to the cytoplasm. Functionally, the UvrABC repair system catalyzes the recognition and processing of DNA lesions. UvrC both incises the 5' and 3' sides of the lesion. The N-terminal half is responsible for the 3' incision and the C-terminal half is responsible for the 5' incision. In Helicobacter hepaticus (strain ATCC 51449 / 3B1), this protein is UvrABC system protein C.